We begin with the raw amino-acid sequence, 1464 residues long: Sister chromatid cohesion protein PDS5 homolog B-B (1464 aa).

Residues 383–419 (LLVNDQLLNFVRERTLDKRWRVRKEAMMGLAQIYKKY) form an HEAT repeat. Residues 1126 to 1464 (KSTNVLGAVN…MKSELEGPLL (339 aa)) are disordered. Over residues 1137 to 1155 (PLSSAGKQMQSKSSRMETV) the composition is skewed to polar residues. A compositionally biased stretch (low complexity) spans 1156 to 1168 (SNASSGSNPSSPG). A compositionally biased stretch (acidic residues) spans 1177–1186 (TELDQIEYED). Composition is skewed to basic and acidic residues over residues 1197-1215 (KKSD…VEKP), 1234-1244 (ELSKPAQEPKS), and 1265-1274 (WQEKRLKEDL). The span at 1286–1295 (KKGRRGRPPK) shows a compositional bias: basic residues. Residues 1287 to 1299 (KGRRGRPPKSAKM) constitute a DNA-binding region (a.T hook 1). A compositionally biased stretch (acidic residues) spans 1325–1342 (PTDEEDHLEISEEQDSEN). Basic residues predominate over residues 1347 to 1357 (RKGRGSSKKTP). Over residues 1359-1373 (KSDSTDSALDTSRPT) the composition is skewed to polar residues. DNA-binding regions (a.T hook) lie at residues 1375–1387 (QKRR…TPTV) and 1391–1403 (KSHV…VVSK). Residues 1390–1400 (KKSHVGRPRKV) show a composition bias toward basic residues. Over residues 1425-1435 (SNEEETADEEV) the composition is skewed to acidic residues. Positions 1441 to 1453 (GRRRTAKKRRWIQ) are enriched in basic residues. The span at 1455-1464 (MKSELEGPLL) shows a compositional bias: basic and acidic residues.

It belongs to the PDS5 family. In terms of assembly, interacts with the cohesin complex. In terms of processing, phosphorylated in mitotic cells.

The protein resides in the nucleus. Plays a role in androgen-induced proliferative arrest. Required for maintenance of sister chromatid cohesion during mitosis. In Xenopus laevis (African clawed frog), this protein is Sister chromatid cohesion protein PDS5 homolog B-B (pds5b-b).